A 664-amino-acid polypeptide reads, in one-letter code: MTPTPDAPAAADAATGAGWLARRRGALARVALAPVAQAIGRVERVADGIAFVSGLEDTMLNEVLRFEGGVTGFAHTLDEDLISVVLLDPDAGVRAQTAVARTGAVLEVPAGPQLLGRVVDPLGRPLDGGAPLDAAHTLPIERAAPAIIERDLVSEPLDTGVLIVDALFTIGRGQRELIIGDRATGKTSLAIDAIVNQRHSDVICVYVAIGQRASAVRRVIDAVRRYGAPERCVFVVAPAACAPGLQWIAPFAGFSIAEYFRDRGQHALVVVDDLTKHAATHRELALLTREPPGREAYPGDIFYVHARLLERAAKLSAALGGGSLSALPIAETDAGNLAAYIPTNLISITDGQIVLDSALFAANQRPAVDVGLSVSRVGGKAQHPALRAASGRLRLDYAQFLELEAFTRFGGLTDARLRAQITRGERIRALITQPRFRALRTLDEVVLLKALAAGALDAMSPDLVAPLRERLPAWLDARIAALTPALAPPRDWLADDAALDALAESVGELIERIAADAARRATAGMPAEDAAGDIGGAFGGEQARGDADRDADHGANREVSREVSPEASREVSREVSCEVSHEADRDAAADAARVAGRAPGRAEPDRAAPRAMPDGPPRAQADGDRASASRPRPDARGDAARTAPSPQGGADANVDAEAEARHKR.

Residue 180–187 (GDRATGKT) coordinates ATP. The disordered stretch occupies residues 525–664 (MPAEDAAGDI…DAEAEARHKR (140 aa)). Residues 543-588 (ARGDADRDADHGANREVSREVSPEASREVSREVSCEVSHEADRDAA) show a composition bias toward basic and acidic residues. Residues 589–599 (ADAARVAGRAP) are compositionally biased toward low complexity. Over residues 621 to 639 (ADGDRASASRPRPDARGDA) the composition is skewed to basic and acidic residues.

Belongs to the ATPase alpha/beta chains family. F-type ATPases have 2 components, CF(1) - the catalytic core - and CF(0) - the membrane proton channel. CF(1) has five subunits: alpha(3), beta(3), gamma(1), delta(1), epsilon(1). CF(0) has three main subunits: a(1), b(2) and c(9-12). The alpha and beta chains form an alternating ring which encloses part of the gamma chain. CF(1) is attached to CF(0) by a central stalk formed by the gamma and epsilon chains, while a peripheral stalk is formed by the delta and b chains.

It is found in the cell inner membrane. It catalyses the reaction ATP + H2O + 4 H(+)(in) = ADP + phosphate + 5 H(+)(out). In terms of biological role, produces ATP from ADP in the presence of a proton gradient across the membrane. The alpha chain is a regulatory subunit. This is ATP synthase subunit alpha 2 from Burkholderia pseudomallei (strain 1710b).